The following is a 464-amino-acid chain: Asparagine--tRNA ligase (464 aa).

The protein belongs to the class-II aminoacyl-tRNA synthetase family. Homodimer.

The protein localises to the cytoplasm. It catalyses the reaction tRNA(Asn) + L-asparagine + ATP = L-asparaginyl-tRNA(Asn) + AMP + diphosphate + H(+). This chain is Asparagine--tRNA ligase, found in Azobacteroides pseudotrichonymphae genomovar. CFP2.